A 230-amino-acid polypeptide reads, in one-letter code: Small ribosomal subunit protein uS3 (230 aa).

The region spanning 39-107 is the KH type-2 domain; sequence VRKYLADKLQ…PAQINIAEIR (69 aa).

The protein belongs to the universal ribosomal protein uS3 family. In terms of assembly, part of the 30S ribosomal subunit. Forms a tight complex with proteins S10 and S14.

Functionally, binds the lower part of the 30S subunit head. Binds mRNA in the 70S ribosome, positioning it for translation. The sequence is that of Small ribosomal subunit protein uS3 from Shewanella oneidensis (strain ATCC 700550 / JCM 31522 / CIP 106686 / LMG 19005 / NCIMB 14063 / MR-1).